Reading from the N-terminus, the 276-residue chain is Diaminopimelate epimerase (276 aa).

Substrate-binding residues include asparagine 13, glutamine 46, and asparagine 66. The Proton donor role is filled by cysteine 75. Substrate is bound by residues 76 to 77 (GN), asparagine 159, asparagine 192, and 210 to 211 (ER). Cysteine 219 serves as the catalytic Proton acceptor. 220 to 221 (GS) provides a ligand contact to substrate.

The protein belongs to the diaminopimelate epimerase family. In terms of assembly, homodimer.

The protein localises to the cytoplasm. The enzyme catalyses (2S,6S)-2,6-diaminopimelate = meso-2,6-diaminopimelate. The protein operates within amino-acid biosynthesis; L-lysine biosynthesis via DAP pathway; DL-2,6-diaminopimelate from LL-2,6-diaminopimelate: step 1/1. Its function is as follows. Catalyzes the stereoinversion of LL-2,6-diaminopimelate (L,L-DAP) to meso-diaminopimelate (meso-DAP), a precursor of L-lysine and an essential component of the bacterial peptidoglycan. The chain is Diaminopimelate epimerase from Vibrio vulnificus (strain CMCP6).